The following is a 563-amino-acid chain: O-fucosyltransferase 14 (563 aa).

Residues 1-16 show a composition bias toward low complexity; the sequence is MVKVSSSTTSSSSSSS. The tract at residues 1 to 25 is disordered; the sequence is MVKVSSSTTSSSSSSSPDEESDLQN. Residues 73–93 traverse the membrane as a helical; Signal-anchor for type II membrane protein segment; sequence IFIFLPIVIILIYLSTDFSNY. Asn135, Asn140, and Asn339 each carry an N-linked (GlcNAc...) asparagine glycan. Residues 412-414 and 528-529 contribute to the substrate site; these read HFR and TF.

This sequence belongs to the glycosyltransferase GT106 family.

The protein localises to the membrane. It participates in glycan metabolism. The sequence is that of O-fucosyltransferase 14 from Arabidopsis thaliana (Mouse-ear cress).